The chain runs to 623 residues: Chaperone protein HtpG (623 aa).

Residues 1-336 (MSMKGQETRG…SNDLPLNVSR (336 aa)) form an a; substrate-binding region. The b stretch occupies residues 337 to 551 (EILQDSRVTQ…ADEMSTQMAK (215 aa)). Positions 552-623 (LFAAAGQEAP…IRRMNKLLSA (72 aa)) are c.

Belongs to the heat shock protein 90 family. Homodimer.

It localises to the cytoplasm. In terms of biological role, molecular chaperone. Has ATPase activity. This is Chaperone protein HtpG from Serratia proteamaculans (strain 568).